Reading from the N-terminus, the 184-residue chain is Cell division protein ZapC (184 aa).

This sequence belongs to the ZapC family. As to quaternary structure, interacts directly with FtsZ.

It localises to the cytoplasm. Functionally, contributes to the efficiency of the cell division process by stabilizing the polymeric form of the cell division protein FtsZ. Acts by promoting interactions between FtsZ protofilaments and suppressing the GTPase activity of FtsZ. This chain is Cell division protein ZapC, found in Idiomarina loihiensis (strain ATCC BAA-735 / DSM 15497 / L2-TR).